The sequence spans 498 residues: Transcription factor kayak (498 aa).

Residues 108 to 127 show a composition bias toward polar residues; it reads ASLGQGSESEDSNASYNDTQ. Disordered stretches follow at residues 108–144 and 177–234; these read ASLGQGSESEDSNASYNDTQMNEEQDTTDTSSAHTDS and GSAS…KRRV. Low complexity-rich tracts occupy residues 135–144 and 177–191; these read TDTSSAHTDS and GSASVGSSNANTSNT. One can recognise a bZIP domain in the interval 212 to 275; sequence EQKRAVRRER…KQLEYLLATH (64 aa). A basic motif region spans residues 214–233; it reads KRAVRRERNKQAAARCRKRR. The interval 240–247 is leucine-zipper; sequence LTEEVEQL. Residues 304 to 325 show a composition bias toward low complexity; sequence AGSSGSGASSHHNHNSNDSSNG. Disordered regions lie at residues 304 to 345 and 465 to 498; these read AGSS…SPLD and TPVSGPLVPNSSSTNKHPLELPTPTAEPSKLVSL. The span at 333–343 shows a compositional bias: polar residues; it reads TLNSTGRSNSP. Serine 342 bears the Phosphoserine mark.

This sequence belongs to the bZIP family. Fos subfamily. As to quaternary structure, homodimer. Heterodimer with Jra. The kay-Jra heterodimer binds more stably to the AP-1 site than either of the two proteins alone.

Its subcellular location is the nucleus. Its function is as follows. Developmentally regulated transcription factor AP-1 binds and recognizes the enhancer DNA sequence: 5'-TGA[CG]TCA-3'. May play a role in the function or determination of a particular subset of cells in the developing embryo. It is able to carry out its function either independently of or in conjunction with Jra. This is Transcription factor kayak from Drosophila simulans (Fruit fly).